A 160-amino-acid polypeptide reads, in one-letter code: Ribosomal RNA large subunit methyltransferase H (160 aa).

The S-adenosyl-L-methionine site is built by Leu-76 and Gly-108.

Belongs to the RNA methyltransferase RlmH family. In terms of assembly, homodimer.

Its subcellular location is the cytoplasm. It carries out the reaction pseudouridine(1915) in 23S rRNA + S-adenosyl-L-methionine = N(3)-methylpseudouridine(1915) in 23S rRNA + S-adenosyl-L-homocysteine + H(+). Its function is as follows. Specifically methylates the pseudouridine at position 1915 (m3Psi1915) in 23S rRNA. The protein is Ribosomal RNA large subunit methyltransferase H of Rhodopseudomonas palustris (strain BisB5).